We begin with the raw amino-acid sequence, 530 residues long: Na(+)/H(+) antiporter NhaB (530 aa).

Transmembrane regions (helical) follow at residues 13–33 (FLGKAPDWYKLAIISFLIINP), 98–118 (LLLVFMVAGIYFMKELLLFIF), 123–145 (LGIQSKILLSVAFCVAAAFLSAF), 149–166 (LTVIAVVISVAVGFYSIY), 205–225 (LLMHAGVGTALGGVMTMVGEP), 238–258 (FGEFIIRMLPVTLPVFFCGIL), 308–328 (IAVWLIVGLALHVAEVGLIGL), 330–350 (VIILATAFTGVIEEHSMGKAF), 356–376 (FTALLAVFFAVVAVIIDQALF), 393–413 (LALFYVANGILSMVSDNVFVG), 451–471 (ATPNGQAAFLFLLTSALAPLI), and 480–500 (IMALPYTIVLALVGLAGIVFF).

The protein belongs to the NhaB Na(+)/H(+) (TC 2.A.34) antiporter family.

The protein localises to the cell inner membrane. The enzyme catalyses 2 Na(+)(in) + 3 H(+)(out) = 2 Na(+)(out) + 3 H(+)(in). Its function is as follows. Na(+)/H(+) antiporter that extrudes sodium in exchange for external protons. This is Na(+)/H(+) antiporter NhaB from Vibrio atlanticus (strain LGP32) (Vibrio splendidus (strain Mel32)).